The sequence spans 467 residues: ATP-dependent protease ATPase subunit HslU (467 aa).

ATP is bound by residues Val-22 and 64–69; that span reads GVGKTE. The interval 166 to 185 is disordered; it reads GQNQDEEEEPPTEEIKTKRS. 3 residues coordinate ATP: Asp-280, Glu-345, and Arg-417.

This sequence belongs to the ClpX chaperone family. HslU subfamily. A double ring-shaped homohexamer of HslV is capped on each side by a ring-shaped HslU homohexamer. The assembly of the HslU/HslV complex is dependent on binding of ATP.

It is found in the cytoplasm. Functionally, ATPase subunit of a proteasome-like degradation complex; this subunit has chaperone activity. The binding of ATP and its subsequent hydrolysis by HslU are essential for unfolding of protein substrates subsequently hydrolyzed by HslV. HslU recognizes the N-terminal part of its protein substrates and unfolds these before they are guided to HslV for hydrolysis. This Staphylococcus epidermidis (strain ATCC 35984 / DSM 28319 / BCRC 17069 / CCUG 31568 / BM 3577 / RP62A) protein is ATP-dependent protease ATPase subunit HslU.